The following is a 227-amino-acid chain: Ribonuclease 3 (227 aa).

The 130-residue stretch at 4–133 folds into the RNase III domain; sequence FEKLEKLLSY…LIAAIYLDSN (130 aa). Position 46 (glutamate 46) interacts with Mg(2+). The active site involves aspartate 50. The Mg(2+) site is built by asparagine 119 and glutamate 122. The active site involves glutamate 122. Residues 158–226 enclose the DRBM domain; sequence DPKTALQEWA…ARSLLHRLKN (69 aa).

It belongs to the ribonuclease III family. In terms of assembly, homodimer. Requires Mg(2+) as cofactor.

The protein resides in the cytoplasm. It catalyses the reaction Endonucleolytic cleavage to 5'-phosphomonoester.. Functionally, digests double-stranded RNA. Involved in the processing of primary rRNA transcript to yield the immediate precursors to the large and small rRNAs (23S and 16S). Processes some mRNAs, and tRNAs when they are encoded in the rRNA operon. Processes pre-crRNA and tracrRNA of type II CRISPR loci if present in the organism. This Rickettsia africae (strain ESF-5) protein is Ribonuclease 3.